A 1318-amino-acid chain; its full sequence is Tetratricopeptide repeat protein 41 (1318 aa).

TPR repeat units follow at residues 401–434 (PRLE…KPCI), 653–686 (WIQE…PVRE), 819–852 (GRII…LLQS), 860–893 (LRAQ…LLRF), 993–1029 (MEFL…KEKA), and 1047–1084 (SDTL…RAAH). Positions 1295-1318 (KPGFPRRSQIESKLLKTSDDPNKE) are disordered. Residues 1302-1318 (SQIESKLLKTSDDPNKE) show a composition bias toward basic and acidic residues.

As to expression, highly expressed in lung and myeloid leukemia cell line (at protein level). Isoform 4: expressed in heart (at protein level).

Its subcellular location is the cytoplasm. In Mus musculus (Mouse), this protein is Tetratricopeptide repeat protein 41.